Consider the following 452-residue polypeptide: Bifunctional protein GlmU (452 aa).

Positions 1–232 (MTTNAPGAVI…EADMQGVNSR (232 aa)) are pyrophosphorylase. UDP-N-acetyl-alpha-D-glucosamine is bound by residues 11-14 (LAAG), lysine 25, glutamine 78, and 83-84 (GT). Aspartate 108 contacts Mg(2+). Residues glycine 144, glutamate 158, and asparagine 230 each coordinate UDP-N-acetyl-alpha-D-glucosamine. Residue asparagine 230 participates in Mg(2+) binding. The linker stretch occupies residues 233 to 253 (ADLAAAEATMQQRLRMAAMAG). The segment at 254 to 452 (GVTMLDPSSV…HKDKKKASGE (199 aa)) is N-acetyltransferase. UDP-N-acetyl-alpha-D-glucosamine contacts are provided by arginine 319 and lysine 337. Histidine 349 functions as the Proton acceptor in the catalytic mechanism. 2 residues coordinate UDP-N-acetyl-alpha-D-glucosamine: tyrosine 352 and asparagine 363. Acetyl-CoA is bound by residues alanine 366, 372 to 373 (NY), serine 391, serine 409, and arginine 426.

The protein in the N-terminal section; belongs to the N-acetylglucosamine-1-phosphate uridyltransferase family. It in the C-terminal section; belongs to the transferase hexapeptide repeat family. Homotrimer. The cofactor is Mg(2+).

The protein resides in the cytoplasm. It catalyses the reaction alpha-D-glucosamine 1-phosphate + acetyl-CoA = N-acetyl-alpha-D-glucosamine 1-phosphate + CoA + H(+). The catalysed reaction is N-acetyl-alpha-D-glucosamine 1-phosphate + UTP + H(+) = UDP-N-acetyl-alpha-D-glucosamine + diphosphate. It participates in nucleotide-sugar biosynthesis; UDP-N-acetyl-alpha-D-glucosamine biosynthesis; N-acetyl-alpha-D-glucosamine 1-phosphate from alpha-D-glucosamine 6-phosphate (route II): step 2/2. Its pathway is nucleotide-sugar biosynthesis; UDP-N-acetyl-alpha-D-glucosamine biosynthesis; UDP-N-acetyl-alpha-D-glucosamine from N-acetyl-alpha-D-glucosamine 1-phosphate: step 1/1. It functions in the pathway bacterial outer membrane biogenesis; LPS lipid A biosynthesis. Its function is as follows. Catalyzes the last two sequential reactions in the de novo biosynthetic pathway for UDP-N-acetylglucosamine (UDP-GlcNAc). The C-terminal domain catalyzes the transfer of acetyl group from acetyl coenzyme A to glucosamine-1-phosphate (GlcN-1-P) to produce N-acetylglucosamine-1-phosphate (GlcNAc-1-P), which is converted into UDP-GlcNAc by the transfer of uridine 5-monophosphate (from uridine 5-triphosphate), a reaction catalyzed by the N-terminal domain. The protein is Bifunctional protein GlmU of Parvibaculum lavamentivorans (strain DS-1 / DSM 13023 / NCIMB 13966).